A 414-amino-acid polypeptide reads, in one-letter code: uncharacterized protein (414 aa).

The chain crosses the membrane as a helical span at residues 367–384 (TTWALTLICIACILLFFV).

The protein resides in the virion membrane. This is an uncharacterized protein from Human cytomegalovirus (strain Merlin) (HHV-5).